The sequence spans 122 residues: Large ribosomal subunit protein uL14 (122 aa).

The protein belongs to the universal ribosomal protein uL14 family. In terms of assembly, part of the 50S ribosomal subunit. Forms a cluster with proteins L3 and L19. In the 70S ribosome, L14 and L19 interact and together make contacts with the 16S rRNA in bridges B5 and B8.

Its function is as follows. Binds to 23S rRNA. Forms part of two intersubunit bridges in the 70S ribosome. In Psychrobacter arcticus (strain DSM 17307 / VKM B-2377 / 273-4), this protein is Large ribosomal subunit protein uL14.